Here is a 380-residue protein sequence, read N- to C-terminus: Alkanesulfonate monooxygenase (380 aa).

It belongs to the SsuD family. As to quaternary structure, homotetramer.

It catalyses the reaction an alkanesulfonate + FMNH2 + O2 = an aldehyde + FMN + sulfite + H2O + 2 H(+). In terms of biological role, catalyzes the desulfonation of aliphatic sulfonates. This is Alkanesulfonate monooxygenase from Pectobacterium carotovorum subsp. carotovorum (strain PC1).